The primary structure comprises 60 residues: Cytotoxin SP15a (60 aa).

Intrachain disulfides connect cysteine 3/cysteine 21, cysteine 14/cysteine 38, cysteine 42/cysteine 53, and cysteine 54/cysteine 59.

It belongs to the three-finger toxin family. Short-chain subfamily. Type IA cytotoxin sub-subfamily. In terms of assembly, monomer in solution; Homodimer and oligomer in the presence of negatively charged lipids forming a pore with a size ranging between 20 and 30 Angstroms. Expressed by the venom gland.

The protein resides in the secreted. Its subcellular location is the target cell membrane. Shows cytolytic activity on many different cells by forming pore in lipid membranes. In vivo, increases heart rate or kills the animal by cardiac arrest. In addition, it binds to heparin with high affinity, interacts with Kv channel-interacting protein 1 (KCNIP1) in a calcium-independent manner, and binds to integrin alpha-V/beta-3 (ITGAV/ITGB3) with moderate affinity. This is Cytotoxin SP15a from Naja atra (Chinese cobra).